Reading from the N-terminus, the 94-residue chain is MLKPLENRVVLRVKEEEEKSMGGIVLTSASQEKPQTAEVIAVGEGKTTNHGTLISPLVKVGDTVIFEKFAGTTVKMDGEEFLILKDSDLLAIVE.

The protein belongs to the GroES chaperonin family. Heptamer of 7 subunits arranged in a ring. Interacts with the chaperonin GroEL.

Its subcellular location is the cytoplasm. Its function is as follows. Together with the chaperonin GroEL, plays an essential role in assisting protein folding. The GroEL-GroES system forms a nano-cage that allows encapsulation of the non-native substrate proteins and provides a physical environment optimized to promote and accelerate protein folding. GroES binds to the apical surface of the GroEL ring, thereby capping the opening of the GroEL channel. This chain is Co-chaperonin GroES, found in Lactococcus lactis subsp. cremoris (strain MG1363).